Here is a 193-residue protein sequence, read N- to C-terminus: dTTP/UTP pyrophosphatase (193 aa).

Asp-77 acts as the Proton acceptor in catalysis.

Belongs to the Maf family. YhdE subfamily. Requires a divalent metal cation as cofactor.

The protein resides in the cytoplasm. The catalysed reaction is dTTP + H2O = dTMP + diphosphate + H(+). It carries out the reaction UTP + H2O = UMP + diphosphate + H(+). Functionally, nucleoside triphosphate pyrophosphatase that hydrolyzes dTTP and UTP. May have a dual role in cell division arrest and in preventing the incorporation of modified nucleotides into cellular nucleic acids. The polypeptide is dTTP/UTP pyrophosphatase (Phocaeicola vulgatus (strain ATCC 8482 / DSM 1447 / JCM 5826 / CCUG 4940 / NBRC 14291 / NCTC 11154) (Bacteroides vulgatus)).